We begin with the raw amino-acid sequence, 134 residues long: Large ribosomal subunit protein bL19 (134 aa).

Residues 110–134 (ARLHQEEGPSSAAPASTPPAAAPQA) are disordered. Residues 125 to 134 (STPPAAAPQA) show a composition bias toward pro residues.

This sequence belongs to the bacterial ribosomal protein bL19 family.

Functionally, this protein is located at the 30S-50S ribosomal subunit interface and may play a role in the structure and function of the aminoacyl-tRNA binding site. The polypeptide is Large ribosomal subunit protein bL19 (Anaeromyxobacter sp. (strain Fw109-5)).